The sequence spans 342 residues: Mitochondrial fission factor (342 aa).

At Met-1 to Met-322 the chain is on the cytoplasmic side. A Phosphothreonine modification is found at Thr-115. Phosphoserine is present on Ala-146. Residue Arg-149 is modified to Phosphothreonine. Phosphoserine is present on residues Lys-151, Ser-155, Ser-157, and Ser-172. Thr-200 carries the phosphothreonine modification. Phosphoserine occurs at positions 202, 229, 233, and 295. A coiled-coil region spans residues Val-291–Met-322. A helical; Anchor for type IV membrane protein transmembrane segment spans residues Val-323–Phe-340. At Arg-341 to Arg-342 the chain is on the mitochondrial intermembrane side.

This sequence belongs to the Tango11 family. In terms of assembly, homodimer. Interacts with DNM1L. Interacts with C11orf65/MFI; the interaction inhibits MFF interaction with DNM1L. In terms of tissue distribution, highly expressed in heart, kidney, liver, brain, muscle, and stomach.

The protein resides in the mitochondrion outer membrane. Its subcellular location is the peroxisome. It localises to the cytoplasmic vesicle. The protein localises to the secretory vesicle. It is found in the synaptic vesicle. Its function is as follows. Plays a role in mitochondrial and peroxisomal fission. Promotes the recruitment and association of the fission mediator dynamin-related protein 1 (DNM1L) to the mitochondrial surface. May be involved in regulation of synaptic vesicle membrane dynamics by recruitment of DNM1L to clathrin-containing vesicles. The polypeptide is Mitochondrial fission factor (MFF) (Homo sapiens (Human)).